Reading from the N-terminus, the 83-residue chain is Polcalcin Bra r 2 (83 aa).

EF-hand domains lie at 5–40 and 43–75; these read TEKA…LGSV and DDIK…NRGL. Positions 18, 20, 22, 24, 29, 53, 55, 57, 59, and 64 each coordinate Ca(2+).

This is Polcalcin Bra r 2 from Brassica campestris (Field mustard).